The sequence spans 600 residues: Glutamine--fructose-6-phosphate aminotransferase [isomerizing] (600 aa).

Cys-2 serves as the catalytic Nucleophile; for GATase activity. Positions 2–217 (CGIVGFIGEQ…DKEIVIVMKE (216 aa)) constitute a Glutamine amidotransferase type-2 domain. SIS domains lie at 283 to 422 (IRNA…AKGE) and 452 to 590 (LAKQ…VDKP). Lys-595 (for Fru-6P isomerization activity) is an active-site residue.

In terms of assembly, homodimer.

The protein localises to the cytoplasm. The catalysed reaction is D-fructose 6-phosphate + L-glutamine = D-glucosamine 6-phosphate + L-glutamate. In terms of biological role, catalyzes the first step in hexosamine metabolism, converting fructose-6P into glucosamine-6P using glutamine as a nitrogen source. The polypeptide is Glutamine--fructose-6-phosphate aminotransferase [isomerizing] (Bacillus thuringiensis subsp. konkukian (strain 97-27)).